Reading from the N-terminus, the 292-residue chain is Inhibitory synaptic factor 1 (292 aa).

Disordered stretches follow at residues 1-25, 122-186, and 198-292; these read MNIR…RERI, SDSV…ERVR, and CDDE…KGKN. Residues 23–63 adopt a coiled-coil conformation; it reads ERIRQRMKMVIGQLEDILRELKEVAKELREVVSQIDKLTSD. Residues 198 to 214 are compositionally biased toward acidic residues; sequence CDDEEGDGEEEAAEEEG. Over residues 263 to 285 the composition is skewed to polar residues; sequence RNSSTQTVSDKSTQTVLPYTATR.

This sequence belongs to the INSYN1 family. In terms of assembly, interacts with GPHN.

It is found in the postsynaptic density. Its function is as follows. Component of the protein machinery at the inhibitory synapses, probably acting as a scaffold. Inhibitory synapses dampen neuronal activity through postsynaptic hyperpolarization. This synaptic inhibition is fundamental for the functioning of the central nervous system, shaping and orchestrating the flow of information through neuronal networks to generate a precise neural code. The protein is Inhibitory synaptic factor 1 of Bos taurus (Bovine).